The primary structure comprises 256 residues: MSNFDNFNTDFYQTSYSIDDQSQGYNYNAGGAQHSKQYAYDPYSQQGGFIPPEMMNQQQPYTGQIYQPTQTYTPAATDSVYGSTFDDEPPLLEELGINFDHIWQKTLTVLHPLKVADGNIMNETDLAGPMVFCLAFGATLLLAGKIQFGYVYGISAIGCLGMYCLLNLMSMTGVSFGCVSSVLGYCLLPMIILSSFAVIFSLQGILGIVLAALIIGWCSFSASKIFISALAMDGQQVLVAYPCALLYGVFALISVF.

At 1–125 (MSNFDNFNTD…ADGNIMNETD (125 aa)) the chain is on the cytoplasmic side. The chain crosses the membrane as a helical span at residues 126–146 (LAGPMVFCLAFGATLLLAGKI). Q147 is a topological domain (lumenal). Residues 148–168 (FGYVYGISAIGCLGMYCLLNL) form a helical membrane-spanning segment. Residues 169–172 (MSMT) are Cytoplasmic-facing. The chain crosses the membrane as a helical span at residues 173 to 193 (GVSFGCVSSVLGYCLLPMIIL). Residues 194–195 (SS) lie on the Lumenal side of the membrane. The chain crosses the membrane as a helical span at residues 196-216 (FAVIFSLQGILGIVLAALIIG). The Cytoplasmic portion of the chain corresponds to 217–235 (WCSFSASKIFISALAMDGQ). The helical transmembrane segment at 236–256 (QVLVAYPCALLYGVFALISVF) threads the bilayer.

It belongs to the YIP1 family.

The protein resides in the endoplasmic reticulum membrane. Its subcellular location is the golgi apparatus. The protein localises to the cis-Golgi network membrane. Its function is as follows. Plays a role in transport between endoplasmic reticulum and Golgi. This is Protein YIPF5 (yipf5) from Xenopus tropicalis (Western clawed frog).